We begin with the raw amino-acid sequence, 324 residues long: Olfactory receptor 8U3 (324 aa).

Over Met-1–Ala-25 the chain is Extracellular. The chain crosses the membrane as a helical span at residues Pro-26–Ile-46. At Thr-47–Arg-54 the chain is on the cytoplasmic side. Residues Leu-55–Ser-75 form a helical membrane-spanning segment. The Extracellular segment spans residues Ala-76–Thr-99. Cysteines 97 and 189 form a disulfide. Residues Gln-100–Tyr-120 form a helical membrane-spanning segment. Over Asp-121 to Arg-139 the chain is Cytoplasmic. The helical transmembrane segment at Val-140–Thr-160 threads the bilayer. Residues Val-161 to Glu-196 lie on the Extracellular side of the membrane. A helical membrane pass occupies residues Ile-197–Ser-217. Topologically, residues Tyr-218–Ala-237 are cytoplasmic. A helical membrane pass occupies residues Ile-238–Met-258. Over Tyr-259–Asp-271 the chain is Extracellular. N-linked (GlcNAc...) asparagine glycosylation occurs at Asn-265. Residues Lys-272–Leu-292 traverse the membrane as a helical segment. The Cytoplasmic segment spans residues Arg-293–Tyr-324.

Belongs to the G-protein coupled receptor 1 family.

The protein resides in the cell membrane. Its function is as follows. Odorant receptor. This Homo sapiens (Human) protein is Olfactory receptor 8U3.